Here is a 65-residue protein sequence, read N- to C-terminus: Large ribosomal subunit protein bL35 (65 aa).

Over residues 1–11 (MPKIKTRRSAA) the composition is skewed to basic residues. The tract at residues 1–25 (MPKIKTRRSAAKRFSVTGSGKFRRR) is disordered.

Belongs to the bacterial ribosomal protein bL35 family.

This is Large ribosomal subunit protein bL35 from Nitratidesulfovibrio vulgaris (strain ATCC 29579 / DSM 644 / CCUG 34227 / NCIMB 8303 / VKM B-1760 / Hildenborough) (Desulfovibrio vulgaris).